Reading from the N-terminus, the 86-residue chain is Small ribosomal subunit protein bS18 (86 aa).

This sequence belongs to the bacterial ribosomal protein bS18 family. In terms of assembly, part of the 30S ribosomal subunit. Forms a tight heterodimer with protein bS6.

Its function is as follows. Binds as a heterodimer with protein bS6 to the central domain of the 16S rRNA, where it helps stabilize the platform of the 30S subunit. The polypeptide is Small ribosomal subunit protein bS18 (Herpetosiphon aurantiacus (strain ATCC 23779 / DSM 785 / 114-95)).